The sequence spans 200 residues: Peptidyl-tRNA hydrolase (200 aa).

Y14 contacts tRNA. Residue H19 is the Proton acceptor of the active site. TRNA is bound by residues F64, N66, and N112.

Belongs to the PTH family. Monomer.

It is found in the cytoplasm. It catalyses the reaction an N-acyl-L-alpha-aminoacyl-tRNA + H2O = an N-acyl-L-amino acid + a tRNA + H(+). Its function is as follows. Hydrolyzes ribosome-free peptidyl-tRNAs (with 1 or more amino acids incorporated), which drop off the ribosome during protein synthesis, or as a result of ribosome stalling. Catalyzes the release of premature peptidyl moieties from peptidyl-tRNA molecules trapped in stalled 50S ribosomal subunits, and thus maintains levels of free tRNAs and 50S ribosomes. The protein is Peptidyl-tRNA hydrolase of Maricaulis maris (strain MCS10) (Caulobacter maris).